A 175-amino-acid chain; its full sequence is Ribosome maturation factor RimM (175 aa).

One can recognise a PRC barrel domain in the interval 96 to 175 (EEDFYWRDLI…LIQVNWEPDF (80 aa)).

This sequence belongs to the RimM family. In terms of assembly, binds ribosomal protein uS19.

It localises to the cytoplasm. Functionally, an accessory protein needed during the final step in the assembly of 30S ribosomal subunit, possibly for assembly of the head region. Essential for efficient processing of 16S rRNA. May be needed both before and after RbfA during the maturation of 16S rRNA. It has affinity for free ribosomal 30S subunits but not for 70S ribosomes. This is Ribosome maturation factor RimM from Psychromonas ingrahamii (strain DSM 17664 / CCUG 51855 / 37).